The sequence spans 161 residues: DNA-directed RNA polymerase 18 kDa subunit (161 aa).

It belongs to the poxviridae DNA-directed RNA polymerase 18 kDa subunit family. As to quaternary structure, the DNA-dependent RNA polymerase used for intermediate and late genes expression consists of eight subunits Rpo30/OPG66, Rpo7/OPG90, Rpo22/OPG103, Rpo147/OPG105, Rpo18/OPG119, Rpo19/OPG131, Rpo132/OPG151 and Rpo35/OPG156. The same holoenzyme, with the addition of the transcription-specificity factor OPG109, is used for early gene expression.

It is found in the virion. The catalysed reaction is RNA(n) + a ribonucleoside 5'-triphosphate = RNA(n+1) + diphosphate. Its function is as follows. Part of the DNA-dependent RNA polymerase which catalyzes the transcription of viral DNA into RNA using the four ribonucleoside triphosphates as substrates. Responsible for the transcription of early, intermediate and late genes. DNA-dependent RNA polymerase associates with the early transcription factor (ETF), itself composed of OPG118 and OPG133, thereby allowing the early genes transcription. Late transcription, and probably also intermediate transcription, require newly synthesized RNA polymerase. The protein is DNA-directed RNA polymerase 18 kDa subunit (OPG119) of Vaccinia virus (strain Ankara) (VACV).